The primary structure comprises 250 residues: 5-oxoprolinase subunit A (250 aa).

It belongs to the LamB/PxpA family. Forms a complex composed of PxpA, PxpB and PxpC.

The enzyme catalyses 5-oxo-L-proline + ATP + 2 H2O = L-glutamate + ADP + phosphate + H(+). In terms of biological role, catalyzes the cleavage of 5-oxoproline to form L-glutamate coupled to the hydrolysis of ATP to ADP and inorganic phosphate. The polypeptide is 5-oxoprolinase subunit A (Klebsiella pneumoniae (strain 342)).